Reading from the N-terminus, the 351-residue chain is Phenylalanine--tRNA ligase alpha subunit (351 aa).

Residues 45 to 69 form a disordered region; the sequence is LGDDAPIPAARRSLGSLPKDQRKDA. Position 269 (Glu269) interacts with Mg(2+).

It belongs to the class-II aminoacyl-tRNA synthetase family. Phe-tRNA synthetase alpha subunit type 1 subfamily. As to quaternary structure, tetramer of two alpha and two beta subunits. Requires Mg(2+) as cofactor.

The protein resides in the cytoplasm. It carries out the reaction tRNA(Phe) + L-phenylalanine + ATP = L-phenylalanyl-tRNA(Phe) + AMP + diphosphate + H(+). The chain is Phenylalanine--tRNA ligase alpha subunit from Corynebacterium jeikeium (strain K411).